The following is a 132-amino-acid chain: Small ribosomal subunit protein uS11 (132 aa).

Belongs to the universal ribosomal protein uS11 family. As to quaternary structure, part of the 30S ribosomal subunit.

Its function is as follows. Located on the platform of the 30S subunit. This chain is Small ribosomal subunit protein uS11, found in Caldivirga maquilingensis (strain ATCC 700844 / DSM 13496 / JCM 10307 / IC-167).